The sequence spans 245 residues: Transcriptional regulatory protein VxrB (245 aa).

The Response regulatory domain maps to 31-142 (TLLLVEDDKN…ELFARIRAQL (112 aa)). Aspartate 78 carries the post-translational modification 4-aspartylphosphate. Residues 151–245 (DSKVVTSNLT…LRGVGYKMKA (95 aa)) constitute a DNA-binding region (ompR/PhoB-type).

Phosphorylated by VxrA.

Its subcellular location is the cytoplasm. Member of the two-component regulatory system VxrB/VxrA involved in the regulation of diverses processes, including virulence, the type VI secretion system (T6SS) and biofilm formation. VxrB positively regulates the expression of the T6SS, a virulence nanomachine that directly translocates effectors into bacterial or host cells, thereby facilitating colonization by competing with sister cells and intestinal microbiota. In addition, it activates vpsL expression and biofilm formation, and represses motility. May regulate biofilm formation via its regulation of key biofilm regulators and cyclic di-GMP levels. Significantly contributes to both attack and defense via T6SS, while also influencing competition via regulation of biofilm matrix production. Is critical for colonization in the infant mouse model. The polypeptide is Transcriptional regulatory protein VxrB (Vibrio cholerae serotype O1 (strain ATCC 39315 / El Tor Inaba N16961)).